Here is a 330-residue protein sequence, read N- to C-terminus: Ferredoxin--NADP reductase (330 aa).

Residues glutamate 35, glutamine 43, tyrosine 48, valine 90, phenylalanine 123, aspartate 285, and threonine 326 each coordinate FAD.

The protein belongs to the ferredoxin--NADP reductase type 2 family. Homodimer. Requires FAD as cofactor.

It catalyses the reaction 2 reduced [2Fe-2S]-[ferredoxin] + NADP(+) + H(+) = 2 oxidized [2Fe-2S]-[ferredoxin] + NADPH. The protein is Ferredoxin--NADP reductase of Streptococcus pyogenes serotype M6 (strain ATCC BAA-946 / MGAS10394).